A 782-amino-acid polypeptide reads, in one-letter code: E3 ubiquitin-protein ligase SopA (782 aa).

The segment at 137–171 (VSVSANNRPTVSEGRTPPVSPSLSLQATSSPSSPA) is disordered. The segment covering 157–171 (PSLSLQATSSPSSPA) has biased composition (low complexity). Catalysis depends on Cys-753, which acts as the Glycyl thioester intermediate.

Belongs to the SopA E3 ligase family. In terms of processing, ubiquitinated in the presence of host E1 ubiquitin-activating enzyme, E2 ubiquitin-conjugating enzyme and ubiquitin.

It is found in the secreted. The protein resides in the host cell. The enzyme catalyses S-ubiquitinyl-[E2 ubiquitin-conjugating enzyme]-L-cysteine + [acceptor protein]-L-lysine = [E2 ubiquitin-conjugating enzyme]-L-cysteine + N(6)-ubiquitinyl-[acceptor protein]-L-lysine.. Functionally, effector proteins function to alter host cell physiology and promote bacterial survival in host tissues. This protein is an E3 ubiquitin ligase that interferes with host's ubiquitination pathway. The chain is E3 ubiquitin-protein ligase SopA (sopA) from Salmonella newport (strain SL254).